Reading from the N-terminus, the 218-residue chain is Probable transaldolase (218 aa).

Lys-87 serves as the catalytic Schiff-base intermediate with substrate.

The protein belongs to the transaldolase family. Type 3B subfamily.

It is found in the cytoplasm. It catalyses the reaction D-sedoheptulose 7-phosphate + D-glyceraldehyde 3-phosphate = D-erythrose 4-phosphate + beta-D-fructose 6-phosphate. Its pathway is carbohydrate degradation; pentose phosphate pathway; D-glyceraldehyde 3-phosphate and beta-D-fructose 6-phosphate from D-ribose 5-phosphate and D-xylulose 5-phosphate (non-oxidative stage): step 2/3. Transaldolase is important for the balance of metabolites in the pentose-phosphate pathway. In Cytophaga hutchinsonii (strain ATCC 33406 / DSM 1761 / CIP 103989 / NBRC 15051 / NCIMB 9469 / D465), this protein is Probable transaldolase.